Consider the following 76-residue polypeptide: Mating-type pheromone BBP1(1) (76 aa).

The residue at position 73 (cysteine 73) is a Cysteine methyl ester. A lipid anchor (S-farnesyl cysteine) is attached at cysteine 73. Residues 74 to 76 (VVA) constitute a propeptide, removed in mature form.

Its subcellular location is the cell membrane. Activates B-regulated development. The polypeptide is Mating-type pheromone BBP1(1) (BBP1(1)) (Schizophyllum commune (Split gill fungus)).